The primary structure comprises 100 residues: NADH-quinone oxidoreductase subunit K (100 aa).

Transmembrane regions (helical) follow at residues 4 to 24 (VTWY…GVLL), 29 to 49 (LIVM…FLAF), and 61 to 81 (IAFF…AVVI).

It belongs to the complex I subunit 4L family. NDH-1 is composed of 14 different subunits. Subunits NuoA, H, J, K, L, M, N constitute the membrane sector of the complex.

The protein localises to the cell inner membrane. It catalyses the reaction a quinone + NADH + 5 H(+)(in) = a quinol + NAD(+) + 4 H(+)(out). Functionally, NDH-1 shuttles electrons from NADH, via FMN and iron-sulfur (Fe-S) centers, to quinones in the respiratory chain. The immediate electron acceptor for the enzyme in this species is believed to be ubiquinone. Couples the redox reaction to proton translocation (for every two electrons transferred, four hydrogen ions are translocated across the cytoplasmic membrane), and thus conserves the redox energy in a proton gradient. This chain is NADH-quinone oxidoreductase subunit K, found in Anaeromyxobacter sp. (strain Fw109-5).